Reading from the N-terminus, the 860-residue chain is Ubiquitin carboxyl-terminal hydrolase 13 (860 aa).

The UBP-type; degenerate zinc finger occupies 168-276 (QVSRHARSLR…EHLLHFGIDM (109 aa)). The Zn(2+) site is built by Cys192, Cys195, Cys212, and His225. Positions 318–857 (TGIKNLGNSC…LGYMYFYRRL (540 aa)) constitute a USP domain. The active-site Nucleophile is Cys327. The disordered stretch occupies residues 611 to 636 (DLTPPIVIPEDTRDSSTNNSLESPEI). UBA domains follow at residues 635–676 (EIDE…IIAH) and 710–750 (QPPE…IFTH). A compositionally biased stretch (acidic residues) spans 755 to 768 (DESEAMSDTADTEP). The interval 755-795 (DESEAMSDTADTEPNDNSFSNANAHTDSSLSPDQDLSSPRV) is disordered. The segment covering 769-780 (NDNSFSNANAHT) has biased composition (polar residues). Residues 781–793 (DSSLSPDQDLSSP) show a composition bias toward low complexity. His819 functions as the Proton acceptor in the catalytic mechanism.

The protein belongs to the peptidase C19 family.

The enzyme catalyses Thiol-dependent hydrolysis of ester, thioester, amide, peptide and isopeptide bonds formed by the C-terminal Gly of ubiquitin (a 76-residue protein attached to proteins as an intracellular targeting signal).. Its activity is regulated as follows. Specifically inhibited by spautin-1 (specific and potent autophagy inhibitor-1), a derivative of MBCQ that binds to usp13 and inhibits deubiquitinase activity. Functionally, deubiquitinase that mediates deubiquitination of target proteins and is involved in various processes such as autophagy and endoplasmic reticulum-associated degradation (ERAD). This chain is Ubiquitin carboxyl-terminal hydrolase 13 (usp13), found in Danio rerio (Zebrafish).